The sequence spans 450 residues: Chitobiosyldiphosphodolichol beta-mannosyltransferase (450 aa).

Residues 1 to 13 (MSWIQIPWSWVVT) are Lumenal-facing. Residues 14–34 (LIVTYLSLPLIIYYLVPYIFY) traverse the membrane as a helical segment. Topologically, residues 35–106 (GNKSSKKRII…PTLTLQGNKR (72 aa)) are cytoplasmic. The segment at residues 107–127 (SIIFLVKKVLFQVSAIIAQLW) is an intramembrane region (helical). The Cytoplasmic segment spans residues 128 to 450 (ELRGSNYMLI…SAMQELKLVA (323 aa)).

It belongs to the glycosyltransferase group 1 family.

The protein localises to the endoplasmic reticulum membrane. It catalyses the reaction an N,N'-diacetylchitobiosyl-diphospho-di-trans,poly-cis-dolichol + GDP-alpha-D-mannose = a beta-D-Man-(1-&gt;4)-beta-D-GlcNAc-(1-&gt;4)-alpha-D-GlcNAc-diphospho-di-trans,poly-cis-dolichol + GDP + H(+). It functions in the pathway protein modification; protein glycosylation. Functionally, participates in the formation of the lipid-linked precursor oligosaccharide for N-glycosylation. Involved in assembling the dolichol-pyrophosphate-GlcNAc(2)-Man(5) intermediate on the cytoplasmic surface of the ER. The polypeptide is Chitobiosyldiphosphodolichol beta-mannosyltransferase (ALG1) (Candida glabrata (strain ATCC 2001 / BCRC 20586 / JCM 3761 / NBRC 0622 / NRRL Y-65 / CBS 138) (Yeast)).